Reading from the N-terminus, the 571-residue chain is Urease subunit alpha (571 aa).

In terms of domain architecture, Urease spans 134–571 (GAIDTHIHFI…LPMAQRYFLF (438 aa)). 3 residues coordinate Ni(2+): His-139, His-141, and Lys-222. Residue Lys-222 is modified to N6-carboxylysine. Substrate is bound at residue His-224. Residues His-251 and His-277 each coordinate Ni(2+). The active-site Proton donor is His-325. Residue Asp-365 participates in Ni(2+) binding.

It belongs to the metallo-dependent hydrolases superfamily. Urease alpha subunit family. In terms of assembly, heterotrimer of UreA (gamma), UreB (beta) and UreC (alpha) subunits. Three heterotrimers associate to form the active enzyme. Requires Ni cation as cofactor. In terms of processing, carboxylation allows a single lysine to coordinate two nickel ions.

The protein resides in the cytoplasm. It carries out the reaction urea + 2 H2O + H(+) = hydrogencarbonate + 2 NH4(+). It functions in the pathway nitrogen metabolism; urea degradation; CO(2) and NH(3) from urea (urease route): step 1/1. In Bordetella pertussis (strain Tohama I / ATCC BAA-589 / NCTC 13251), this protein is Urease subunit alpha.